Reading from the N-terminus, the 513-residue chain is Coniferin beta-glucosidase (513 aa).

A signal peptide spans 1-23; it reads MEVSVLMWVLLFYSLLGFQVTTA. Residues glutamine 44, histidine 145, and 190 to 191 contribute to the a beta-D-glucoside site; that span reads NE. The active-site Proton donor is the glutamate 191. An intrachain disulfide couples cysteine 210 to cysteine 219. A glycan (N-linked (GlcNAc...) asparagine) is linked at asparagine 223. Tyrosine 336 and glutamate 408 together coordinate a beta-D-glucoside. Catalysis depends on glutamate 408, which acts as the Nucleophile. An N-linked (GlcNAc...) asparagine glycan is attached at asparagine 447. A beta-D-glucoside is bound by residues tryptophan 457, 464-465, and phenylalanine 473; that span reads EW.

Belongs to the glycosyl hydrolase 1 family. In terms of assembly, homodimer. Glycosylated.

The enzyme catalyses 4-O-(beta-D-glucosyl)-(E)-coniferol + H2O = (E)-coniferol + D-glucose. Its activity is regulated as follows. Inhibited by glucono-1,5-lactone, but not by bromoconduritol or conduritol B epoxide. In terms of biological role, involved in the release of monolignols for lignin biosynthesis. Unable to hydrolyze 4-nitrophenyl beta-cellobioside or alpha-linked methylumbelliferyl glucoside. The protein is Coniferin beta-glucosidase of Pinus contorta (Shore pine).